The following is a 188-amino-acid chain: Large ribosomal subunit protein eL18 (188 aa).

It belongs to the eukaryotic ribosomal protein eL18 family.

Its subcellular location is the cytoplasm. The polypeptide is Large ribosomal subunit protein eL18 (RpL18) (Drosophila melanogaster (Fruit fly)).